Consider the following 406-residue polypeptide: 4-hydroxy-3-methylbut-2-en-1-yl diphosphate synthase (ferredoxin) (406 aa).

The [4Fe-4S] cluster site is built by Cys-313, Cys-316, Cys-347, and Glu-354.

This sequence belongs to the IspG family. The cofactor is [4Fe-4S] cluster.

It carries out the reaction (2E)-4-hydroxy-3-methylbut-2-enyl diphosphate + 2 oxidized [2Fe-2S]-[ferredoxin] + H2O = 2-C-methyl-D-erythritol 2,4-cyclic diphosphate + 2 reduced [2Fe-2S]-[ferredoxin] + H(+). It functions in the pathway isoprenoid biosynthesis; isopentenyl diphosphate biosynthesis via DXP pathway; isopentenyl diphosphate from 1-deoxy-D-xylulose 5-phosphate: step 5/6. Functionally, converts 2C-methyl-D-erythritol 2,4-cyclodiphosphate (ME-2,4cPP) into 1-hydroxy-2-methyl-2-(E)-butenyl 4-diphosphate. The protein is 4-hydroxy-3-methylbut-2-en-1-yl diphosphate synthase (ferredoxin) of Picosynechococcus sp. (strain ATCC 27264 / PCC 7002 / PR-6) (Agmenellum quadruplicatum).